The primary structure comprises 361 residues: Holliday junction branch migration complex subunit RuvB (361 aa).

Positions Met1–Arg21 are disordered. A large ATPase domain (RuvB-L) region spans residues Met1 to Tyr184. ATP contacts are provided by residues Leu23, Arg24, Gly65, Lys68, Thr69, Thr70, Glu131–Tyr133, Arg174, Tyr184, and Arg221. Thr69 contributes to the Mg(2+) binding site. Residues Thr185–Glu255 form a small ATPAse domain (RuvB-S) region. The interval His258–Asp361 is head domain (RuvB-H). Arg294, Arg313, and Arg318 together coordinate DNA.

This sequence belongs to the RuvB family. In terms of assembly, homohexamer. Forms an RuvA(8)-RuvB(12)-Holliday junction (HJ) complex. HJ DNA is sandwiched between 2 RuvA tetramers; dsDNA enters through RuvA and exits via RuvB. An RuvB hexamer assembles on each DNA strand where it exits the tetramer. Each RuvB hexamer is contacted by two RuvA subunits (via domain III) on 2 adjacent RuvB subunits; this complex drives branch migration. In the full resolvosome a probable DNA-RuvA(4)-RuvB(12)-RuvC(2) complex forms which resolves the HJ.

The protein resides in the cytoplasm. It catalyses the reaction ATP + H2O = ADP + phosphate + H(+). The RuvA-RuvB-RuvC complex processes Holliday junction (HJ) DNA during genetic recombination and DNA repair, while the RuvA-RuvB complex plays an important role in the rescue of blocked DNA replication forks via replication fork reversal (RFR). RuvA specifically binds to HJ cruciform DNA, conferring on it an open structure. The RuvB hexamer acts as an ATP-dependent pump, pulling dsDNA into and through the RuvAB complex. RuvB forms 2 homohexamers on either side of HJ DNA bound by 1 or 2 RuvA tetramers; 4 subunits per hexamer contact DNA at a time. Coordinated motions by a converter formed by DNA-disengaged RuvB subunits stimulates ATP hydrolysis and nucleotide exchange. Immobilization of the converter enables RuvB to convert the ATP-contained energy into a lever motion, pulling 2 nucleotides of DNA out of the RuvA tetramer per ATP hydrolyzed, thus driving DNA branch migration. The RuvB motors rotate together with the DNA substrate, which together with the progressing nucleotide cycle form the mechanistic basis for DNA recombination by continuous HJ branch migration. Branch migration allows RuvC to scan DNA until it finds its consensus sequence, where it cleaves and resolves cruciform DNA. In Bartonella henselae (strain ATCC 49882 / DSM 28221 / CCUG 30454 / Houston 1) (Rochalimaea henselae), this protein is Holliday junction branch migration complex subunit RuvB.